The following is a 259-amino-acid chain: Trans-aconitate 2-methyltransferase (259 aa).

Belongs to the methyltransferase superfamily. Tam family.

The protein localises to the cytoplasm. The enzyme catalyses trans-aconitate + S-adenosyl-L-methionine = (E)-3-(methoxycarbonyl)pent-2-enedioate + S-adenosyl-L-homocysteine. Catalyzes the S-adenosylmethionine monomethyl esterification of trans-aconitate. This Variovorax paradoxus (strain S110) protein is Trans-aconitate 2-methyltransferase.